The chain runs to 213 residues: Adenylyl-sulfate kinase (213 aa).

Basic and acidic residues predominate over residues 1 to 17 (MPAHQLDDHNQETRSDD). The segment at 1–20 (MPAHQLDDHNQETRSDDENI) is disordered. 47 to 54 (GLSGSGKS) lines the ATP pocket. Catalysis depends on Ser-121, which acts as the Phosphoserine intermediate.

It belongs to the APS kinase family.

It catalyses the reaction adenosine 5'-phosphosulfate + ATP = 3'-phosphoadenylyl sulfate + ADP + H(+). It functions in the pathway sulfur metabolism; hydrogen sulfide biosynthesis; sulfite from sulfate: step 2/3. Functionally, catalyzes the synthesis of activated sulfate. The sequence is that of Adenylyl-sulfate kinase from Yersinia pestis.